Reading from the N-terminus, the 346-residue chain is Holliday junction branch migration complex subunit RuvB (346 aa).

The segment at 1–182 (MSEAARLIAP…FGIPVRLNFY (182 aa)) is large ATPase domain (RuvB-L). Residues Arg-22, Gly-63, Lys-66, Thr-67, Thr-68, 129–131 (EDF), Arg-172, Tyr-182, and Arg-219 contribute to the ATP site. Thr-67 provides a ligand contact to Mg(2+). The tract at residues 183 to 253 (TVEELELIVR…IADEALTRLL (71 aa)) is small ATPAse domain (RuvB-S). Residues 256-346 (SMGLDQLDRR…SQFRLTLEDD (91 aa)) form a head domain (RuvB-H) region. Residues Arg-292, Arg-311, and Arg-316 each coordinate DNA.

This sequence belongs to the RuvB family. In terms of assembly, homohexamer. Forms an RuvA(8)-RuvB(12)-Holliday junction (HJ) complex. HJ DNA is sandwiched between 2 RuvA tetramers; dsDNA enters through RuvA and exits via RuvB. An RuvB hexamer assembles on each DNA strand where it exits the tetramer. Each RuvB hexamer is contacted by two RuvA subunits (via domain III) on 2 adjacent RuvB subunits; this complex drives branch migration. In the full resolvosome a probable DNA-RuvA(4)-RuvB(12)-RuvC(2) complex forms which resolves the HJ.

It is found in the cytoplasm. It carries out the reaction ATP + H2O = ADP + phosphate + H(+). Functionally, the RuvA-RuvB-RuvC complex processes Holliday junction (HJ) DNA during genetic recombination and DNA repair, while the RuvA-RuvB complex plays an important role in the rescue of blocked DNA replication forks via replication fork reversal (RFR). RuvA specifically binds to HJ cruciform DNA, conferring on it an open structure. The RuvB hexamer acts as an ATP-dependent pump, pulling dsDNA into and through the RuvAB complex. RuvB forms 2 homohexamers on either side of HJ DNA bound by 1 or 2 RuvA tetramers; 4 subunits per hexamer contact DNA at a time. Coordinated motions by a converter formed by DNA-disengaged RuvB subunits stimulates ATP hydrolysis and nucleotide exchange. Immobilization of the converter enables RuvB to convert the ATP-contained energy into a lever motion, pulling 2 nucleotides of DNA out of the RuvA tetramer per ATP hydrolyzed, thus driving DNA branch migration. The RuvB motors rotate together with the DNA substrate, which together with the progressing nucleotide cycle form the mechanistic basis for DNA recombination by continuous HJ branch migration. Branch migration allows RuvC to scan DNA until it finds its consensus sequence, where it cleaves and resolves cruciform DNA. In Rhizobium meliloti (strain 1021) (Ensifer meliloti), this protein is Holliday junction branch migration complex subunit RuvB.